A 453-amino-acid polypeptide reads, in one-letter code: tRNA modification GTPase MnmE (453 aa).

Positions 22, 79, and 119 each coordinate (6S)-5-formyl-5,6,7,8-tetrahydrofolate. Residues Gly-215–Gly-376 form the TrmE-type G domain. Asn-225 provides a ligand contact to K(+). Residues Asn-225–Ser-230, Thr-244–Thr-250, Asp-269–Gly-272, and Asn-334–Asp-337 contribute to the GTP site. Ser-229 is a binding site for Mg(2+). K(+)-binding residues include Thr-244, Ile-246, and Thr-249. Residue Thr-250 coordinates Mg(2+). Lys-453 serves as a coordination point for (6S)-5-formyl-5,6,7,8-tetrahydrofolate.

This sequence belongs to the TRAFAC class TrmE-Era-EngA-EngB-Septin-like GTPase superfamily. TrmE GTPase family. As to quaternary structure, homodimer. Heterotetramer of two MnmE and two MnmG subunits. The cofactor is K(+).

The protein resides in the cytoplasm. In terms of biological role, exhibits a very high intrinsic GTPase hydrolysis rate. Involved in the addition of a carboxymethylaminomethyl (cmnm) group at the wobble position (U34) of certain tRNAs, forming tRNA-cmnm(5)s(2)U34. The polypeptide is tRNA modification GTPase MnmE (Shewanella baltica (strain OS195)).